A 258-amino-acid polypeptide reads, in one-letter code: MLHVISPAKTLDFETPPITRHFTQPQFLDHAQQLIDELRPLNPQQVSELMDISEKLGVLNAQRFLDWQLPFTTENAKQAVLAFKGDVYTGMQADRFSSQDLAWAQQRLRILSGLYGLLRPLDLIQPYRLEMGTHFANSRGKNLYEFWGNRLTEQLNRELAQAPQPLLVNLASNEYWGAVQARHLSGEVITPTFKDRKNGQYKIISFFAKKARGMMSAWIIQQRLDQAEGLKDFNSAGYRYNPAMSSAREWVFTREEPV.

Belongs to the UPF0246 family.

The sequence is that of UPF0246 protein CJA_0191 from Cellvibrio japonicus (strain Ueda107) (Pseudomonas fluorescens subsp. cellulosa).